Consider the following 176-residue polypeptide: Putative Ras-related protein RABA4e (176 aa).

This sequence belongs to the small GTPase superfamily. Rab family.

This chain is Putative Ras-related protein RABA4e (RABA4E), found in Arabidopsis thaliana (Mouse-ear cress).